The following is a 391-amino-acid chain: E3 ubiquitin-protein ligase RMND5A (391 aa).

The LisH domain occupies 114–146; it reads SQQILSEVMVEHFFRQGMLDVAEELCQEAGLSI. The region spanning 153-210 is the CTLH domain; the sequence is PFVELNRILEALKVRVLRPALEWAVSNREMLMAQNSSLEFKLHRLYFISLLMGGTVNQ. The RING-Gid-type zinc-finger motif lies at 336–377; that stretch reads CPILRQQTTDNNPPMKLVCGHIISRDALNKMFNGSKLKCPYC.

As to quaternary structure, identified in the CTLH complex that contains at least RANBP9, MKLN1, MAEA, RMND5A, GID8 and ARMC8.

It localises to the nucleus. It is found in the nucleoplasm. Its subcellular location is the cytoplasm. The enzyme catalyses S-ubiquitinyl-[E2 ubiquitin-conjugating enzyme]-L-cysteine + [acceptor protein]-L-lysine = [E2 ubiquitin-conjugating enzyme]-L-cysteine + N(6)-ubiquitinyl-[acceptor protein]-L-lysine.. In terms of biological role, E3 ubiquitin-protein ligase component of the CTLH complex. In Xenopus tropicalis (Western clawed frog), this protein is E3 ubiquitin-protein ligase RMND5A (rmnd5a).